The primary structure comprises 386 residues: S-adenosylmethionine synthase (386 aa).

Residue Glu8 participates in Mg(2+) binding. His14 is an ATP binding site. Glu42 is a binding site for K(+). L-methionine-binding residues include Glu55 and Gln98. ATP is bound by residues 166 to 168, 234 to 237, Asp245, 251 to 252, Ala268, Lys272, and Lys276; these read DGK, SGRF, and RK. Asp245 is a binding site for L-methionine. Lys276 is a binding site for L-methionine.

The protein belongs to the AdoMet synthase family. Homotetramer. Mn(2+) serves as cofactor. Mg(2+) is required as a cofactor. The cofactor is Co(2+). It depends on K(+) as a cofactor.

Its subcellular location is the cytoplasm. It catalyses the reaction L-methionine + ATP + H2O = S-adenosyl-L-methionine + phosphate + diphosphate. The protein operates within amino-acid biosynthesis; S-adenosyl-L-methionine biosynthesis; S-adenosyl-L-methionine from L-methionine: step 1/1. In terms of biological role, catalyzes the formation of S-adenosylmethionine from methionine and ATP. The reaction comprises two steps that are both catalyzed by the same enzyme: formation of S-adenosylmethionine (AdoMet) and triphosphate, and subsequent hydrolysis of the triphosphate. The chain is S-adenosylmethionine synthase (METK) from Ostreococcus tauri.